Consider the following 208-residue polypeptide: Phomoidride biosynthesis cluster protein B (208 aa).

Belongs to the tstB family.

Functionally, phosphatidylethanolamine-binding protein; part of the gene cluster that mediates the biosynthesis of the antihypercholesterolemic agents phomoidrides which are dimeric anhydrides. Within the pathway, phiB is not essential for dimerization and its function has still to be determined. The pathway begins with the highly reducing polyketide synthase phiA that catalyzes the formation of a C12-fatty acyl-ACP, starting from one acetate and 5 malonate units. The hydrolase phiM is involved in the release of the C12-fatty acyl chain from phiA. The alkylcitrate synthase (ACS) phiJ and the alkylcitrate dehydratase (ACDH) phiI then give rise to decarboxylated monomeric anhydrides by coupling the C12-fatty acyl chain with oxalacetic acid. The cyclase phiC is responsible for the dimerization of the monomeric anhydrides which leads to the production of prephomoidride that contains the characteristic bicyclo[4.3.1]deca-1,6-diene system of phomoidrides. Iterative oxidation catalyzed by the alpha-ketoglutarate-dependent dioxygenase phiK produced then phomoidride A. Finally, the methyltransferase phiE converts phomoidride A to phomoidride B via an acetalization reaction. The phosphatidylethanolamine-binding protein phiB and phiN are not essential for dimerization and their functions have still to be determined. This is Phomoidride biosynthesis cluster protein B from Fungal sp. (strain ATCC 74256).